The chain runs to 167 residues: NAD(P)H-quinone oxidoreductase subunit I, chloroplastic (167 aa).

2 4Fe-4S ferredoxin-type domains span residues 55–84 and 95–124; these read GRIH…VDWK and LNYS…MTEE. Residues Cys-64, Cys-67, Cys-70, Cys-74, Cys-104, Cys-107, Cys-110, and Cys-114 each coordinate [4Fe-4S] cluster.

Belongs to the complex I 23 kDa subunit family. In terms of assembly, NDH is composed of at least 16 different subunits, 5 of which are encoded in the nucleus. It depends on [4Fe-4S] cluster as a cofactor.

The protein resides in the plastid. It is found in the chloroplast thylakoid membrane. The catalysed reaction is a plastoquinone + NADH + (n+1) H(+)(in) = a plastoquinol + NAD(+) + n H(+)(out). It catalyses the reaction a plastoquinone + NADPH + (n+1) H(+)(in) = a plastoquinol + NADP(+) + n H(+)(out). Functionally, NDH shuttles electrons from NAD(P)H:plastoquinone, via FMN and iron-sulfur (Fe-S) centers, to quinones in the photosynthetic chain and possibly in a chloroplast respiratory chain. The immediate electron acceptor for the enzyme in this species is believed to be plastoquinone. Couples the redox reaction to proton translocation, and thus conserves the redox energy in a proton gradient. The chain is NAD(P)H-quinone oxidoreductase subunit I, chloroplastic from Arabis hirsuta (Hairy rock-cress).